Here is a 294-residue protein sequence, read N- to C-terminus: Bifunctional protein FolD (294 aa).

NADP(+) contacts are provided by residues 171–173, Ser-196, and Ile-237; that span reads GRS.

Belongs to the tetrahydrofolate dehydrogenase/cyclohydrolase family. Homodimer.

The catalysed reaction is (6R)-5,10-methylene-5,6,7,8-tetrahydrofolate + NADP(+) = (6R)-5,10-methenyltetrahydrofolate + NADPH. The enzyme catalyses (6R)-5,10-methenyltetrahydrofolate + H2O = (6R)-10-formyltetrahydrofolate + H(+). It functions in the pathway one-carbon metabolism; tetrahydrofolate interconversion. In terms of biological role, catalyzes the oxidation of 5,10-methylenetetrahydrofolate to 5,10-methenyltetrahydrofolate and then the hydrolysis of 5,10-methenyltetrahydrofolate to 10-formyltetrahydrofolate. The polypeptide is Bifunctional protein FolD (Synechocystis sp. (strain ATCC 27184 / PCC 6803 / Kazusa)).